Reading from the N-terminus, the 195-residue chain is Putative manganese efflux pump MntP (195 aa).

6 consecutive transmembrane segments (helical) span residues 3–23 (LSAT…ASVG), 40–60 (GLIF…LGLL), 68–88 (WDHW…VLAG), 106–126 (VLIA…VGLA), 132–152 (ILHA…IGML), and 165–185 (AEII…YSHI).

It belongs to the MntP (TC 9.B.29) family.

Its subcellular location is the cell inner membrane. Its function is as follows. Probably functions as a manganese efflux pump. The polypeptide is Putative manganese efflux pump MntP (Sodalis glossinidius (strain morsitans)).